The chain runs to 209 residues: Small ribosomal subunit protein uS4 (209 aa).

The 67-residue stretch at 98-164 (RRLDNVVYRL…LPIKNAIELN (67 aa)) folds into the S4 RNA-binding domain.

This sequence belongs to the universal ribosomal protein uS4 family. Part of the 30S ribosomal subunit. Contacts protein S5. The interaction surface between S4 and S5 is involved in control of translational fidelity.

One of the primary rRNA binding proteins, it binds directly to 16S rRNA where it nucleates assembly of the body of the 30S subunit. In terms of biological role, with S5 and S12 plays an important role in translational accuracy. This Thermosipho melanesiensis (strain DSM 12029 / CIP 104789 / BI429) protein is Small ribosomal subunit protein uS4.